Here is a 231-residue protein sequence, read N- to C-terminus: Sporulation protein RMD6 (231 aa).

It is found in the peroxisome. Required for sporulation. Required for meiotic nuclear division. This chain is Sporulation protein RMD6 (RMD6), found in Saccharomyces cerevisiae (strain ATCC 204508 / S288c) (Baker's yeast).